Reading from the N-terminus, the 301-residue chain is ATP synthase gamma chain (301 aa).

This sequence belongs to the ATPase gamma chain family. As to quaternary structure, F-type ATPases have 2 components, CF(1) - the catalytic core - and CF(0) - the membrane proton channel. CF(1) has five subunits: alpha(3), beta(3), gamma(1), delta(1), epsilon(1). CF(0) has three main subunits: a, b and c.

It localises to the cell inner membrane. Functionally, produces ATP from ADP in the presence of a proton gradient across the membrane. The gamma chain is believed to be important in regulating ATPase activity and the flow of protons through the CF(0) complex. This chain is ATP synthase gamma chain, found in Helicobacter pylori (strain Shi470).